The primary structure comprises 142 residues: SLTDKDKATVKALWGKISKSADAVGADAVGRMIVVYPQTKTYFSHWPDLAPNSPHVKTHGKTVMTGIALAVSKIDDLTNGLLELSEEHAYKMRVDPANFKILSHCMLVVIATMFPKEFTPEAHVCLDKFLCAVSLALSERYR.

S1 is subject to N-acetylserine. Residues 1–142 form the Globin domain; that stretch reads SLTDKDKATV…VSLALSERYR (142 aa). H59 contacts O2. H88 contributes to the heme b binding site.

Belongs to the globin family. In terms of assembly, hb1 is a heterotetramer of two alpha chains and two beta-1 chains. Hb2 is a heterotetramer of two alpha chains and two beta-2 chains. As to expression, red blood cells.

Its function is as follows. Involved in oxygen transport from gills to the various peripheral tissues. The polypeptide is Hemoglobin subunit alpha (hba) (Pseudaphritis urvillii (Congolli)).